Consider the following 21-residue polypeptide: Short neurotoxin E1 (21 aa).

A disordered region spans residues 1 to 21 (MICYNHQSSEPPTTXTCSEGQ).

Post-translationally, contains 4 disulfide bonds. As to expression, expressed by the venom gland.

It localises to the secreted. Binds to muscle nicotinic acetylcholine receptor (nAChR) and inhibit acetylcholine from binding to the receptor, thereby impairing neuromuscular transmission. This chain is Short neurotoxin E1, found in Micrurus pyrrhocryptus (Coral snake).